The chain runs to 387 residues: Eukaryotic translation initiation factor 3 subunit M (387 aa).

The PCI domain occupies 181-340 (RSSKVMIELL…RKVHISSTMH (160 aa)).

It belongs to the eIF-3 subunit M family. In terms of assembly, component of the eukaryotic translation initiation factor 3 (eIF-3) complex. The eIF-3 complex interacts with pix.

It localises to the cytoplasm. The protein localises to the golgi apparatus. Its function is as follows. Component of the eukaryotic translation initiation factor 3 (eIF-3) complex, which is involved in protein synthesis of a specialized repertoire of mRNAs and, together with other initiation factors, stimulates binding of mRNA and methionyl-tRNAi to the 40S ribosome. The eIF-3 complex specifically targets and initiates translation of a subset of mRNAs involved in cell proliferation. The chain is Eukaryotic translation initiation factor 3 subunit M from Drosophila willistoni (Fruit fly).